Consider the following 580-residue polypeptide: MTLFILTETSAGYALLKAKDKKLLKRDDLATEASTAEGVSNLLKLKSFQKFDSAATALEEVASLVEGKVTPRLASLLDEVKDEKKVSLAVADPKLGNAIGKLPGLSIELVADSSTTDVFRAIREHLPTLIPGLLPQDMSTMSLGLSHSLARHKLKFSPDKIDTMIVQAIGLLDDLDKELNNYAMRVKEWYGWHFPELAKILNDNIAYARLVLKMGMRTNWESSDLAEILPEEIEGAVKAAADRSMGTEISQEDLEHIQALAEQVVGFAEYRQQLAGYLTARMNAIAPNLTALVGDLVGARLIAHAGSLTNLSKSPASTLQILGAEKALFRALKTKHDTPKYGLIYHASLIGQATGKNKGKMARVLAAKASLGLRVDALAEWDDDATEEDKAALGTEARYNLERKLAAMEGKPLKPRGVAIAPNGAPQAQKFEINEARKYNADADAVTGDEPASAKKSKSKKLVEEVQDEEMADAADSDEESDSSDEETDKKSKKSKDSELEKLAEKAGLSLKRYKRKLERGEIQFDAEGNPSAVSKKDIKKAKKEAKKSAKGEEKKRKRTDDGEVDNSEKKKKKKKKGEE.

The 126-residue stretch at 285–410 folds into the Nop domain; sequence IAPNLTALVG…LERKLAAMEG (126 aa). A disordered region spans residues 444–580; that stretch reads DAVTGDEPAS…KKKKKKKGEE (137 aa). Acidic residues predominate over residues 465–487; it reads EVQDEEMADAADSDEESDSSDEE. Basic and acidic residues-rich tracts occupy residues 495–505 and 547–562; these read SKDSELEKLAE and KKSAKGEEKKRKRTDD. Positions 570–580 are enriched in basic residues; it reads KKKKKKKKGEE.

It belongs to the NOP5/NOP56 family.

It localises to the nucleus. It is found in the nucleolus. Functionally, required for pre-18S rRNA processing. May bind microtubules. This is Nucleolar protein 58 (nop58) from Aspergillus niger (strain ATCC MYA-4892 / CBS 513.88 / FGSC A1513).